The primary structure comprises 403 residues: 3-oxoacyl-[acyl-carrier-protein] synthase 2 (403 aa).

In terms of domain architecture, Ketosynthase family 3 (KS3) spans 1–403; it reads VITGMGALSP…GGHNAVLVFK (403 aa). Active-site for beta-ketoacyl synthase activity residues include C158, H297, and H334.

The protein belongs to the thiolase-like superfamily. Beta-ketoacyl-ACP synthases family.

It catalyses the reaction a fatty acyl-[ACP] + malonyl-[ACP] + H(+) = a 3-oxoacyl-[ACP] + holo-[ACP] + CO2. The enzyme catalyses (9Z)-hexadecenoyl-[ACP] + malonyl-[ACP] + H(+) = 3-oxo-(11Z)-octadecenoyl-[ACP] + holo-[ACP] + CO2. It functions in the pathway lipid metabolism; fatty acid biosynthesis. Involved in the type II fatty acid elongation cycle. Catalyzes the elongation of a wide range of acyl-ACP by the addition of two carbons from malonyl-ACP to an acyl acceptor. Can efficiently catalyze the conversion of palmitoleoyl-ACP (cis-hexadec-9-enoyl-ACP) to cis-vaccenoyl-ACP (cis-octadec-11-enoyl-ACP), an essential step in the thermal regulation of fatty acid composition. This is 3-oxoacyl-[acyl-carrier-protein] synthase 2 (fabF) from Staphylococcus aureus.